The following is a 309-amino-acid chain: Foldase protein PrsA 2 (309 aa).

An N-terminal signal peptide occupies residues 1-20 (MKYRLIGVGASLVVAVMLTG). The N-palmitoyl cysteine moiety is linked to residue Cys-21. Residue Cys-21 is the site of S-diacylglycerol cysteine attachment. Residues 137–232 (MPMTTVQHIA…TADTKDKPTY (96 aa)) form the PpiC domain.

The protein belongs to the PrsA family.

The protein resides in the cell membrane. It carries out the reaction [protein]-peptidylproline (omega=180) = [protein]-peptidylproline (omega=0). Plays a major role in protein secretion by helping the post-translocational extracellular folding of several secreted proteins. This Lactiplantibacillus plantarum (strain ATCC BAA-793 / NCIMB 8826 / WCFS1) (Lactobacillus plantarum) protein is Foldase protein PrsA 2 (prsA2).